A 466-amino-acid chain; its full sequence is Putative multidrug resistance protein MdtD (466 aa).

The next 14 helical transmembrane spans lie at 11–31, 48–68, 71–91, 105–125, 137–157, 164–184, 194–214, 218–238, 262–282, 286–306, 328–347, 351–370, 403–423, and 429–449; these read LWIV…VNTA, SVIV…GWLA, IGVK…SLLC, VIQG…VMKI, FVTL…GFLV, WIFL…WFLM, FDIS…LALD, SLGI…IALL, FSIG…LPFM, FLQL…VPMV, VLIV…ALVA, WIWM…AIRF, LGVS…MAAG, and MVFI…ALIF.

This sequence belongs to the major facilitator superfamily. TCR/Tet family.

It is found in the cell inner membrane. The protein is Putative multidrug resistance protein MdtD of Pectobacterium carotovorum subsp. carotovorum (strain PC1).